We begin with the raw amino-acid sequence, 378 residues long: 1-acyl-sn-glycerol-3-phosphate acyltransferase delta (378 aa).

Residues 11-31 (FLCHLIFCYVFIVSGLIINTI) form a helical membrane-spanning segment. The HXXXXD motif motif lies at 96 to 101 (HKFEID). 3 helical membrane-spanning segments follow: residues 125–145 (ELAYVPIIGWMWYFTEMVFCT), 307–327 (TLVNWLFWASMLLYPFFRFVI), and 338–358 (LASFVLVFFVASMGVRWMIGV).

It belongs to the 1-acyl-sn-glycerol-3-phosphate acyltransferase family.

It is found in the endoplasmic reticulum membrane. It carries out the reaction a 1-acyl-sn-glycero-3-phosphate + an acyl-CoA = a 1,2-diacyl-sn-glycero-3-phosphate + CoA. The enzyme catalyses (4Z,7Z,10Z,13Z,16Z,19Z)-docosahexaenoyl-CoA + 1-hexadecanoyl-sn-glycero-3-phosphate = 1-hexadecanoyl-2-(4Z,7Z,10Z,13Z,16Z,19Z-docosahexaenoyl)-sn-glycero-3-phosphate + CoA. It catalyses the reaction 1-octadecanoyl-sn-glycero-3-phosphate + (9Z,12Z)-octadecadienoyl-CoA = 1-octadecanoyl-2-(9Z,12Z-octadecadienoyl)-sn-glycero-3-phosphate + CoA. The catalysed reaction is 1-octadecanoyl-sn-glycero-3-phosphate + (4Z,7Z,10Z,13Z,16Z,19Z)-docosahexaenoyl-CoA = 1-octadecanoyl-2-(4Z,7Z,10Z,13Z,16Z,19Z-docosahexaenoyl)-sn-glycero-3-phosphate + CoA. It carries out the reaction (4Z,7Z,10Z,13Z,16Z,19Z)-docosahexaenoyl-CoA + 1-(9Z-octadecenoyl)-sn-glycero-3-phosphate = 1-(9Z-octadecenoyl)-2-(4Z,7Z,10Z,13Z,16Z,19Z-docosahexaenoyl)-sn-glycero-3-phosphate + CoA. It participates in phospholipid metabolism; CDP-diacylglycerol biosynthesis; CDP-diacylglycerol from sn-glycerol 3-phosphate: step 2/3. Functionally, converts 1-acyl-sn-glycerol-3-phosphate (lysophosphatidic acid or LPA) into 1,2-diacyl-sn-glycerol-3-phosphate (phosphatidic acid or PA) by incorporating an acyl moiety at the sn-2 position of the glycerol backbone. Exhibits high acyl-CoA specificity for polyunsaturated fatty acyl-CoA, especially docosahexaenoyl-CoA (22:6-CoA, DHA-CoA). In Bos taurus (Bovine), this protein is 1-acyl-sn-glycerol-3-phosphate acyltransferase delta (AGPAT4).